The primary structure comprises 124 residues: Large ribosomal subunit protein bL12 (124 aa).

The disordered stretch occupies residues alanine 94–lysine 124.

This sequence belongs to the bacterial ribosomal protein bL12 family. As to quaternary structure, homodimer. Part of the ribosomal stalk of the 50S ribosomal subunit. Forms a multimeric L10(L12)X complex, where L10 forms an elongated spine to which 2 to 4 L12 dimers bind in a sequential fashion. Binds GTP-bound translation factors.

Its function is as follows. Forms part of the ribosomal stalk which helps the ribosome interact with GTP-bound translation factors. Is thus essential for accurate translation. The chain is Large ribosomal subunit protein bL12 from Paraburkholderia phytofirmans (strain DSM 17436 / LMG 22146 / PsJN) (Burkholderia phytofirmans).